The sequence spans 415 residues: MSTMREMYPKKGRVILHVDMNCFFASVEIAHDSSLQGKPLAVAGNEKERKGIIITCSYEAREYGIRTTMPLWEAKRLCPQLIVRRPNFTLYREASFQMFQILSRFTEKIQPVSIDEGYLDITDCYALGSPLEIAKMIQQALLTELQLPCSIGIAPNLFLAKTASDMKKPLGITVLRKRDIPEMIWPLPVGAMHGIGEKTAEKLNDIHIQTIEQLAKGNEHIIRAKIGKHGVDLQRRAKGMDDRQVDPSQMGQHKSVGNSMTFSKDMDEEKELLDMLERLSKSVSKRLQKRTLVSYNIQIMIKYHDRRTVTRSKQLKNAIWEERDIFQAASRLWKQHWDGDSVRLLGVTATEIEWKTESVKQLDLFSFEEDAKEEPLLAVIDQINDKYGMPLLQRGSQLLRKQEKSFQQKLESKFM.

The UmuC domain maps to 15–196 (ILHVDMNCFF…LPVGAMHGIG (182 aa)). Mg(2+) contacts are provided by aspartate 19 and aspartate 115. Residue glutamate 116 is part of the active site. Residues 238–260 (KGMDDRQVDPSQMGQHKSVGNSM) are disordered. A compositionally biased stretch (polar residues) spans 246–260 (DPSQMGQHKSVGNSM).

The protein belongs to the DNA polymerase type-Y family. Monomer. The cofactor is Mg(2+).

The protein resides in the cytoplasm. The enzyme catalyses DNA(n) + a 2'-deoxyribonucleoside 5'-triphosphate = DNA(n+1) + diphosphate. Its function is as follows. Poorly processive, error-prone DNA polymerase involved in untargeted mutagenesis. Copies undamaged DNA at stalled replication forks, which arise in vivo from mismatched or misaligned primer ends. These misaligned primers can be extended by PolIV. Exhibits no 3'-5' exonuclease (proofreading) activity. May be involved in translesional synthesis, in conjunction with the beta clamp from PolIII. This chain is DNA polymerase IV, found in Bacillus cereus (strain ZK / E33L).